Reading from the N-terminus, the 302-residue chain is Quinolinate synthase (302 aa).

Iminosuccinate-binding residues include H24 and S41. Residue C86 coordinates [4Fe-4S] cluster. Iminosuccinate is bound by residues 112–114 and S129; that span reads YVN. C171 lines the [4Fe-4S] cluster pocket. Residues 197–199 and T214 contribute to the iminosuccinate site; that span reads HPE. C259 is a binding site for [4Fe-4S] cluster.

The protein belongs to the quinolinate synthase family. Type 2 subfamily. It depends on [4Fe-4S] cluster as a cofactor.

The protein localises to the cytoplasm. It carries out the reaction iminosuccinate + dihydroxyacetone phosphate = quinolinate + phosphate + 2 H2O + H(+). It participates in cofactor biosynthesis; NAD(+) biosynthesis; quinolinate from iminoaspartate: step 1/1. Functionally, catalyzes the condensation of iminoaspartate with dihydroxyacetone phosphate to form quinolinate. The chain is Quinolinate synthase from Dehalococcoides mccartyi (strain ATCC BAA-2266 / KCTC 15142 / 195) (Dehalococcoides ethenogenes (strain 195)).